The following is a 344-amino-acid chain: Cathepsin B-like cysteine proteinase 5 (344 aa).

A signal peptide spans 1-15; the sequence is MWKLSAILLVAAASA. Positions 16-81 are excised as a propeptide; the sequence is VVIPGHREAP…DIVATEVSDA (66 aa). 6 cysteine pairs are disulfide-bonded: Cys-95-Cys-124, Cys-107-Cys-154, Cys-143-Cys-213, Cys-144-Cys-150, Cys-183-Cys-217, and Cys-191-Cys-203. Cys-110 is a catalytic residue. Catalysis depends on residues His-286 and Asn-306.

This sequence belongs to the peptidase C1 family.

The sequence is that of Cathepsin B-like cysteine proteinase 5 (cpr-5) from Caenorhabditis elegans.